The following is a 148-amino-acid chain: UPF0260 protein Maqu_1608 (148 aa).

Belongs to the UPF0260 family.

This Marinobacter nauticus (strain ATCC 700491 / DSM 11845 / VT8) (Marinobacter aquaeolei) protein is UPF0260 protein Maqu_1608.